A 60-amino-acid chain; its full sequence is Large ribosomal subunit protein bL32 (60 aa).

The tract at residues 1 to 36 (MAVQQNKKSPSKRGMHRSHNALNTPGLAIEPTTGET) is disordered. Positions 9–19 (SPSKRGMHRSH) are enriched in basic residues.

This sequence belongs to the bacterial ribosomal protein bL32 family.

In Methylibium petroleiphilum (strain ATCC BAA-1232 / LMG 22953 / PM1), this protein is Large ribosomal subunit protein bL32.